The sequence spans 240 residues: uncharacterized protein (240 aa).

A run of 2 helical transmembrane segments spans residues 16–36 (AVFF…YFIP) and 67–87 (FITA…VIAM).

It localises to the cell membrane. This is an uncharacterized protein from Bacillus subtilis (strain 168).